Here is a 567-residue protein sequence, read N- to C-terminus: NADH-ubiquinone oxidoreductase chain 2 (567 aa).

The next 14 helical transmembrane spans lie at Leu2–Ile22, Ile43–Ile63, Asn85–Ile105, Leu133–Thr153, Ile158–Ile178, Leu189–Leu209, Ile236–Met256, Tyr274–Leu294, Leu312–Leu332, Ile340–Ile360, Ile372–Ala392, Leu423–Phe443, Leu459–Phe479, and Val530–Ile550.

This sequence belongs to the complex I subunit 2 family.

Its subcellular location is the mitochondrion inner membrane. It carries out the reaction a ubiquinone + NADH + 5 H(+)(in) = a ubiquinol + NAD(+) + 4 H(+)(out). In terms of biological role, core subunit of the mitochondrial membrane respiratory chain NADH dehydrogenase (Complex I) that is believed to belong to the minimal assembly required for catalysis. Complex I functions in the transfer of electrons from NADH to the respiratory chain. The immediate electron acceptor for the enzyme is believed to be ubiquinone. This Wickerhamomyces canadensis (Yeast) protein is NADH-ubiquinone oxidoreductase chain 2 (ND2).